The sequence spans 55 residues: Large ribosomal subunit protein bL33 (55 aa).

Belongs to the bacterial ribosomal protein bL33 family.

This Alcanivorax borkumensis (strain ATCC 700651 / DSM 11573 / NCIMB 13689 / SK2) protein is Large ribosomal subunit protein bL33.